The primary structure comprises 129 residues: UPF0102 protein RD1_1191 (129 aa).

It belongs to the UPF0102 family.

The protein is UPF0102 protein RD1_1191 of Roseobacter denitrificans (strain ATCC 33942 / OCh 114) (Erythrobacter sp. (strain OCh 114)).